Reading from the N-terminus, the 258-residue chain is Regulatory protein RecX (258 aa).

It belongs to the RecX family.

Its subcellular location is the cytoplasm. Its function is as follows. Modulates RecA activity. The protein is Regulatory protein RecX of Streptococcus pyogenes serotype M5 (strain Manfredo).